Consider the following 327-residue polypeptide: Putative gluconeogenesis factor (327 aa).

The protein belongs to the gluconeogenesis factor family.

The protein resides in the cytoplasm. Required for morphogenesis under gluconeogenic growth conditions. The sequence is that of Putative gluconeogenesis factor (yjiF) from Lactococcus lactis subsp. lactis (strain IL1403) (Streptococcus lactis).